We begin with the raw amino-acid sequence, 374 residues long: Aminomethyltransferase (374 aa).

The protein belongs to the GcvT family. The glycine cleavage system is composed of four proteins: P, T, L and H.

The catalysed reaction is N(6)-[(R)-S(8)-aminomethyldihydrolipoyl]-L-lysyl-[protein] + (6S)-5,6,7,8-tetrahydrofolate = N(6)-[(R)-dihydrolipoyl]-L-lysyl-[protein] + (6R)-5,10-methylene-5,6,7,8-tetrahydrofolate + NH4(+). The glycine cleavage system catalyzes the degradation of glycine. This Prochlorococcus marinus (strain MIT 9313) protein is Aminomethyltransferase.